Consider the following 408-residue polypeptide: Imidazolonepropionase (408 aa).

Positions 73 and 75 each coordinate Fe(3+). Zn(2+)-binding residues include H73 and H75. 4-imidazolone-5-propanoate contacts are provided by R82, Y145, and H178. Y145 contributes to the N-formimidoyl-L-glutamate binding site. H243 contacts Fe(3+). H243 is a Zn(2+) binding site. Q246 is a 4-imidazolone-5-propanoate binding site. Residue D318 coordinates Fe(3+). D318 lines the Zn(2+) pocket. The N-formimidoyl-L-glutamate site is built by N320 and G322. Residue S323 participates in 4-imidazolone-5-propanoate binding.

This sequence belongs to the metallo-dependent hydrolases superfamily. HutI family. Zn(2+) serves as cofactor. The cofactor is Fe(3+).

It localises to the cytoplasm. It carries out the reaction 4-imidazolone-5-propanoate + H2O = N-formimidoyl-L-glutamate. The protein operates within amino-acid degradation; L-histidine degradation into L-glutamate; N-formimidoyl-L-glutamate from L-histidine: step 3/3. Functionally, catalyzes the hydrolytic cleavage of the carbon-nitrogen bond in imidazolone-5-propanoate to yield N-formimidoyl-L-glutamate. It is the third step in the universal histidine degradation pathway. The protein is Imidazolonepropionase of Shewanella loihica (strain ATCC BAA-1088 / PV-4).